The chain runs to 185 residues: Ribosome-recycling factor (185 aa).

It belongs to the RRF family.

The protein resides in the cytoplasm. Functionally, responsible for the release of ribosomes from messenger RNA at the termination of protein biosynthesis. May increase the efficiency of translation by recycling ribosomes from one round of translation to another. This is Ribosome-recycling factor from Nocardia farcinica (strain IFM 10152).